The sequence spans 304 residues: Acetylglutamate kinase (304 aa).

Substrate contacts are provided by residues 70–71 (GG), R92, and N196.

It belongs to the acetylglutamate kinase family. ArgB subfamily.

It is found in the cytoplasm. It catalyses the reaction N-acetyl-L-glutamate + ATP = N-acetyl-L-glutamyl 5-phosphate + ADP. It functions in the pathway amino-acid biosynthesis; L-arginine biosynthesis; N(2)-acetyl-L-ornithine from L-glutamate: step 2/4. Its function is as follows. Catalyzes the ATP-dependent phosphorylation of N-acetyl-L-glutamate. This Methanococcoides burtonii (strain DSM 6242 / NBRC 107633 / OCM 468 / ACE-M) protein is Acetylglutamate kinase.